A 296-amino-acid polypeptide reads, in one-letter code: Protein-export membrane protein SecF (296 aa).

A run of 6 helical transmembrane segments spans residues 23–43 (MIIYPLIVFGIAIIIIIANYV), 144–164 (AIVYAFIGMAIVVFLFFRVPV), 169–189 (VVFSAFSDMIIAIALMNIFGI), 194–214 (ATIAALLMLIGYSVDSNILLT), 236–256 (GFTMSTTTLGALASLWIFSTA), and 265–285 (VLIFGLLADFMNTWILNAGVL).

This sequence belongs to the SecD/SecF family. SecF subfamily. In terms of assembly, part of the protein translocation apparatus. Forms a complex with SecD.

It is found in the cell membrane. Functionally, involved in protein export. This chain is Protein-export membrane protein SecF, found in Pyrococcus furiosus (strain ATCC 43587 / DSM 3638 / JCM 8422 / Vc1).